Consider the following 198-residue polypeptide: uncharacterized protein (198 aa).

It is found in the plastid. The protein resides in the chloroplast. This is an uncharacterized protein from Antithamnion sp. (Red alga).